The chain runs to 344 residues: Large ribosomal subunit protein uL3 (344 aa).

Belongs to the universal ribosomal protein uL3 family. In terms of assembly, part of the 50S ribosomal subunit. Forms a cluster with proteins L14 and L24e.

In terms of biological role, one of the primary rRNA binding proteins, it binds directly near the 3'-end of the 23S rRNA, where it nucleates assembly of the 50S subunit. The polypeptide is Large ribosomal subunit protein uL3 (Aeropyrum pernix (strain ATCC 700893 / DSM 11879 / JCM 9820 / NBRC 100138 / K1)).